Here is a 349-residue protein sequence, read N- to C-terminus: 5-deoxyribose 1-phosphate isomerase (349 aa).

Substrate-binding positions include 49 to 51, Arg-92, and Gln-199; that span reads RGA. The active-site Proton donor is Asp-240. Substrate is bound at residue 250-251; the sequence is NK.

Belongs to the EIF-2B alpha/beta/delta subunits family. DrdI subfamily.

It carries out the reaction 5-deoxy-alpha-D-ribose 1-phosphate = 5-deoxy-D-ribulose 1-phosphate. The protein operates within carbohydrate degradation. Catalyzes the isomerization of 5-deoxy-alpha-D-ribose 1-phosphate to 5-deoxy-D-ribulose 1-phosphate, as part of a 5-deoxyribose salvage pathway that recycles this toxic radical SAM enzyme by-product to mainstream metabolites. In Clostridium botulinum (strain Okra / Type B1), this protein is 5-deoxyribose 1-phosphate isomerase.